The chain runs to 511 residues: MASDSSFPGASSNVAEYSVSEISGALKRTVEDTFGHVRVRGEISGYRGPHSSGHAYFALKDDRARLEAVIWRGSMSRLRFRPEEGMEVIATGKLTTYPGSSKYQIVIEQMEPAGAGALMALLEERKQRLAAEGLFDPALKQLLPFMPRVIGVVTSPTGAVIRDIIHRISDRYPLRVIVWPVRVQGDTCGPEVATAVNGFNTLPDDGPIPRPDVLIVARGGGSLEDLWGFNDEIVVRAVAASHIPVISAVGHETDWTLIDLAADMRAPTPTGAAEMAVPVKADLQASLASQSARLSSAMSRFFDQKRQAHRAAARAMPSADQLLALPRRRFDEAASRLTRALFVNTQKKRVHFDGHARQLSPRLLQRRLVELERGVTMLGQRLPRALEAFLRERQTAFTHRANRLSPEPILRRTRLTGSTLEQLDRRRDQAVRLLIERVKRRSQELDRLMRTLSYESVLERGFAVVFDAQGKPVKQAAAVSPGDALSVRFRDGDVGVVARAGLTIPDPTKGQ.

It belongs to the XseA family. In terms of assembly, heterooligomer composed of large and small subunits.

Its subcellular location is the cytoplasm. It catalyses the reaction Exonucleolytic cleavage in either 5'- to 3'- or 3'- to 5'-direction to yield nucleoside 5'-phosphates.. Its function is as follows. Bidirectionally degrades single-stranded DNA into large acid-insoluble oligonucleotides, which are then degraded further into small acid-soluble oligonucleotides. This Brucella canis (strain ATCC 23365 / NCTC 10854 / RM-666) protein is Exodeoxyribonuclease 7 large subunit.